The following is a 208-amino-acid chain: Thiamine-phosphate synthase (208 aa).

4-amino-2-methyl-5-(diphosphooxymethyl)pyrimidine-binding positions include 36–40 (QLRMK) and D68. Positions 69 and 88 each coordinate Mg(2+). Residue T107 participates in 4-amino-2-methyl-5-(diphosphooxymethyl)pyrimidine binding. Residue 133–135 (TTT) coordinates 2-[(2R,5Z)-2-carboxy-4-methylthiazol-5(2H)-ylidene]ethyl phosphate. K136 contributes to the 4-amino-2-methyl-5-(diphosphooxymethyl)pyrimidine binding site. G169 provides a ligand contact to 2-[(2R,5Z)-2-carboxy-4-methylthiazol-5(2H)-ylidene]ethyl phosphate.

The protein belongs to the thiamine-phosphate synthase family. Mg(2+) is required as a cofactor.

The catalysed reaction is 2-[(2R,5Z)-2-carboxy-4-methylthiazol-5(2H)-ylidene]ethyl phosphate + 4-amino-2-methyl-5-(diphosphooxymethyl)pyrimidine + 2 H(+) = thiamine phosphate + CO2 + diphosphate. The enzyme catalyses 2-(2-carboxy-4-methylthiazol-5-yl)ethyl phosphate + 4-amino-2-methyl-5-(diphosphooxymethyl)pyrimidine + 2 H(+) = thiamine phosphate + CO2 + diphosphate. It carries out the reaction 4-methyl-5-(2-phosphooxyethyl)-thiazole + 4-amino-2-methyl-5-(diphosphooxymethyl)pyrimidine + H(+) = thiamine phosphate + diphosphate. The protein operates within cofactor biosynthesis; thiamine diphosphate biosynthesis; thiamine phosphate from 4-amino-2-methyl-5-diphosphomethylpyrimidine and 4-methyl-5-(2-phosphoethyl)-thiazole: step 1/1. Functionally, condenses 4-methyl-5-(beta-hydroxyethyl)thiazole monophosphate (THZ-P) and 2-methyl-4-amino-5-hydroxymethyl pyrimidine pyrophosphate (HMP-PP) to form thiamine monophosphate (TMP). This Phocaeicola vulgatus (strain ATCC 8482 / DSM 1447 / JCM 5826 / CCUG 4940 / NBRC 14291 / NCTC 11154) (Bacteroides vulgatus) protein is Thiamine-phosphate synthase.